The sequence spans 85 residues: Protein C4 (85 aa).

Glycine 2 carries the N-myristoyl glycine; by host lipid modification. A disordered region spans residues 42–65 (LNPAPTSSPTSTRTETQLNGGNSR). Residues 44–57 (PAPTSSPTSTRTET) are compositionally biased toward low complexity.

This sequence belongs to the geminiviridae protein AC4/C4 family. As to quaternary structure, interacts with Arabidopsis thaliana RCH2, ASK7/ASK-eta and ASK6/ASK-zeta. In terms of processing, phosphorylated by Arabidopsis thaliana ASK7/ASK-eta mainly on threonine and serine residues. Expressed in vascular tissues, and especially in phloem cells.

It is found in the host cell membrane. Major determinant of pathogenesis that affects the hyperplastic response of the host to viral infection. Mediates the induction of cell division in permissive cells, mainly in phloem. May act as a suppressor of RNA-mediated gene silencing, also known as post-transcriptional gene silencing (PTGS), a mechanism of plant viral defense that limits the accumulation of viral RNAs. The protein is Protein C4 of Beet curly top virus (strain California/Logan) (BCTV).